The chain runs to 77 residues: Putative antitoxin VapB24 (77 aa).

Functionally, possibly the antitoxin component of a type II toxin-antitoxin (TA) system. Its cognate toxin is VapC24 (Potential). The polypeptide is Putative antitoxin VapB24 (vapB24) (Mycobacterium tuberculosis (strain CDC 1551 / Oshkosh)).